The chain runs to 413 residues: MQRERMSKKKISQVHCIPSGDHILMTASSSKHIPHIRFYKAWKGNNRFCCGGRLIFGPDVSSLYLTSFLIGAPALTFCIRMLVWIKRGDPFFNYTVLASGFILTLLDFTFLMLTSARDPGIIPRNKTSMILEDDSDSSLTQSMEWVNNKTPNLKIPRTKDVFVNGYTIKVKFCDTCLLYRPPRASHCSICNNCVQRFDHHCPWVGQCIARRNYPFFICFISSSTLLCIYVFVFSWINLIRQPGKLWRTMSDDIVSVILIVYTFVAVWFVGGLTIFHFYLMSTNQTTYENFRYRYDKKENPYKRGLLKNVKEVLFAKIPPSQLDLRAMVPEEDDMTIASNDSEYESEYTSSVRYDTEMGGKLIKRDSPRKLPLPTRNLDDIKDISDNYDRSTTTREDASDRDPSFFSSQLDLPK.

2 helical membrane passes run Leu65–Ile85 and Val96–Ala116. A DHHC domain is found at Lys171–Ser221. Cys201 acts as the S-palmitoyl cysteine intermediate in catalysis. The next 2 helical transmembrane spans lie at Phe216–Ile236 and Ser255–Phe275. Positions Arg364–Lys413 are disordered. The span at Asn376 to Pro402 shows a compositional bias: basic and acidic residues. The segment covering Phe404–Lys413 has biased composition (polar residues).

The protein belongs to the DHHC palmitoyltransferase family. Expressed in flowers and pollen.

It is found in the endoplasmic reticulum membrane. It localises to the cytoplasmic vesicle membrane. It catalyses the reaction L-cysteinyl-[protein] + hexadecanoyl-CoA = S-hexadecanoyl-L-cysteinyl-[protein] + CoA. Its function is as follows. Palmitoyl acyltransferase. The sequence is that of Probable protein S-acyltransferase 3 (PAT03) from Arabidopsis thaliana (Mouse-ear cress).